We begin with the raw amino-acid sequence, 163 residues long: Type VII secretion system protein EsaG (163 aa).

Interacts with EssD (via C-terminus). Interacts with EssE.

The protein localises to the cytoplasm. Component of the type VII secretion system (Ess). Also acts as part of toxin-antitoxin system. Counteracts the toxic effect of EssD via direct interaction. This chain is Type VII secretion system protein EsaG, found in Staphylococcus aureus (strain NCTC 8325 / PS 47).